Consider the following 240-residue polypeptide: MDLRLIFGPTCTGKTSTAVALAQQTGLPVLSLDRVQCCPQLSTGSGRPTVEELKGTSRLYLDDRPLVKGIIAAKQAHERLMGEVYNYEAHGGLILEGGSISLLKCMAQSSYWSADFRWHIIRHELADEETFMNVAKARVKQMLRPAAGLSIIQELVDLWKEPRLRPILKEIDGYRYAMLFASQNQITSDMLLQLDADMEDKLIHGIAQEYLIHARRQEQKFPRVNAAAYDGFEGHPFGMY.

Belongs to the isopentenyl transferase family.

The catalysed reaction is dimethylallyl diphosphate + AMP = N(6)-(dimethylallyl)adenosine 5'-phosphate + diphosphate. Functionally, transfers dimethylallyl groups to AMP as part of the biosynthesis of cytokinin phytohormones. The chain is Adenylate dimethylallyltransferase (izt) from Agrobacterium fabrum (strain C58 / ATCC 33970) (Agrobacterium tumefaciens (strain C58)).